The primary structure comprises 207 residues: Large ribosomal subunit protein uL4 (207 aa).

A disordered region spans residues 53-76 (TVSEVSGTTKKPFKQKGTGNARQG).

Belongs to the universal ribosomal protein uL4 family. As to quaternary structure, part of the 50S ribosomal subunit.

One of the primary rRNA binding proteins, this protein initially binds near the 5'-end of the 23S rRNA. It is important during the early stages of 50S assembly. It makes multiple contacts with different domains of the 23S rRNA in the assembled 50S subunit and ribosome. In terms of biological role, forms part of the polypeptide exit tunnel. The polypeptide is Large ribosomal subunit protein uL4 (Rickettsia bellii (strain OSU 85-389)).